The following is a 182-amino-acid chain: Ribosome-recycling factor (182 aa).

This sequence belongs to the RRF family.

It localises to the cytoplasm. In terms of biological role, responsible for the release of ribosomes from messenger RNA at the termination of protein biosynthesis. May increase the efficiency of translation by recycling ribosomes from one round of translation to another. This Gloeothece citriformis (strain PCC 7424) (Cyanothece sp. (strain PCC 7424)) protein is Ribosome-recycling factor.